The following is a 339-amino-acid chain: DNA-directed RNA polymerase subunit alpha (339 aa).

The tract at residues 1–238 (MVDPIVTKNW…EQLSIFINFD (238 aa)) is alpha N-terminal domain (alpha-NTD). An alpha C-terminal domain (alpha-CTD) region spans residues 255 to 339 (LNENLFRSVD…KAAPQGAPKV (85 aa)).

This sequence belongs to the RNA polymerase alpha chain family. Homodimer. The RNAP catalytic core consists of 2 alpha, 1 beta, 1 beta' and 1 omega subunit. When a sigma factor is associated with the core the holoenzyme is formed, which can initiate transcription.

The catalysed reaction is RNA(n) + a ribonucleoside 5'-triphosphate = RNA(n+1) + diphosphate. Functionally, DNA-dependent RNA polymerase catalyzes the transcription of DNA into RNA using the four ribonucleoside triphosphates as substrates. The chain is DNA-directed RNA polymerase subunit alpha from Anaeromyxobacter sp. (strain Fw109-5).